Reading from the N-terminus, the 625-residue chain is Glutamine--fructose-6-phosphate aminotransferase [isomerizing] (625 aa).

The Nucleophile; for GATase activity role is filled by Cys2. The region spanning Cys2–Asp229 is the Glutamine amidotransferase type-2 domain. SIS domains are found at residues Ser298–Thr437 and Leu470–Pro615. Lys620 serves as the catalytic For Fru-6P isomerization activity.

As to quaternary structure, homodimer.

Its subcellular location is the cytoplasm. The enzyme catalyses D-fructose 6-phosphate + L-glutamine = D-glucosamine 6-phosphate + L-glutamate. Its function is as follows. Catalyzes the first step in hexosamine metabolism, converting fructose-6P into glucosamine-6P using glutamine as a nitrogen source. The chain is Glutamine--fructose-6-phosphate aminotransferase [isomerizing] from Mycobacterium leprae (strain TN).